The chain runs to 364 residues: NF-kappa-B inhibitor epsilon (364 aa).

The tract at residues 1–108 is disordered; sequence MSDARKGPDE…GSPLPPAGVL (108 aa). Phosphoserine is present on Ser-18. The segment covering 36 to 48 has biased composition (low complexity); it reads PGSGSSQSGCPQP. Residues 51–70 show a composition bias toward basic and acidic residues; that stretch reads HAPETHKEPEKEDADGERAD. Over residues 93-104 the composition is skewed to pro residues; the sequence is PSPPAPGSPLPP. ANK repeat units follow at residues 122–155, 157–186, 190–219, 233–262, 267–296, and 300–329; these read DGDTLLHLAVIHEAPSVLFCCLAFLPQEVLDIQN, LYQTALHLAVHLDQPDVVRALVLKGASRIL, HGDTALHVACRRQNLACACCLLEEQPEPGR, QGLACLHIATLQRNQPLIELLLQNGADIDV, SGKTALHLAVETQERSLVQFLLQAGARVDA, and NGCTPLHLAAGRGLNSISSTLCEAGADSLL.

The protein belongs to the NF-kappa-B inhibitor family. In terms of assembly, interacts with RELA, REL, NFKB1 nuclear factor NF-kappa-B p50 subunit and NFKB2 nuclear factor NF-kappa-B p52 subunit. Interacts with HNRNPA2B1; the interaction may be mediated by the RRM2 domain of HNRNPA2B1, and HNRNPA2B1 may interact simultaneously with FAM76B and either NFKBIA or NFKBIE to form a complex. Post-translationally, serine phosphorylated; followed by proteasome-dependent degradation.

It localises to the cytoplasm. In terms of biological role, sequesters NF-kappa-B transcription factor complexes in the cytoplasm, thereby inhibiting their activity. Sequestered complexes include NFKB1/p50-RELA/p65 and NFKB1/p50-REL/c-Rel complexes. Limits B-cell activation in response to pathogens, and also plays an important role in B-cell development. This is NF-kappa-B inhibitor epsilon (Nfkbie) from Mus musculus (Mouse).